The following is a 498-amino-acid chain: ATP synthase subunit beta, chloroplastic (498 aa).

A Phosphothreonine modification is found at Thr-6. A Phosphoserine modification is found at Ser-13. ATP is bound at residue Gly-172–Thr-179.

It belongs to the ATPase alpha/beta chains family. F-type ATPases have 2 components, CF(1) - the catalytic core - and CF(0) - the membrane proton channel. CF(1) has five subunits: alpha(3), beta(3), gamma(1), delta(1), epsilon(1). CF(0) has four main subunits: a(1), b(1), b'(1) and c(9-12).

It is found in the plastid. Its subcellular location is the chloroplast thylakoid membrane. It catalyses the reaction ATP + H2O + 4 H(+)(in) = ADP + phosphate + 5 H(+)(out). Functionally, produces ATP from ADP in the presence of a proton gradient across the membrane. The catalytic sites are hosted primarily by the beta subunits. This Raphanus sativus (Radish) protein is ATP synthase subunit beta, chloroplastic.